Here is a 156-residue protein sequence, read N- to C-terminus: 6,7-dimethyl-8-ribityllumazine synthase (156 aa).

5-amino-6-(D-ribitylamino)uracil is bound by residues Phe23, 57–59 (AYE), and 81–83 (AII). 86 to 87 (GT) provides a ligand contact to (2S)-2-hydroxy-3-oxobutyl phosphate. The Proton donor role is filled by His89. Residue Phe114 participates in 5-amino-6-(D-ribitylamino)uracil binding. Arg128 contacts (2S)-2-hydroxy-3-oxobutyl phosphate.

This sequence belongs to the DMRL synthase family.

The enzyme catalyses (2S)-2-hydroxy-3-oxobutyl phosphate + 5-amino-6-(D-ribitylamino)uracil = 6,7-dimethyl-8-(1-D-ribityl)lumazine + phosphate + 2 H2O + H(+). The protein operates within cofactor biosynthesis; riboflavin biosynthesis; riboflavin from 2-hydroxy-3-oxobutyl phosphate and 5-amino-6-(D-ribitylamino)uracil: step 1/2. Catalyzes the formation of 6,7-dimethyl-8-ribityllumazine by condensation of 5-amino-6-(D-ribitylamino)uracil with 3,4-dihydroxy-2-butanone 4-phosphate. This is the penultimate step in the biosynthesis of riboflavin. The polypeptide is 6,7-dimethyl-8-ribityllumazine synthase (Helicobacter pylori (strain J99 / ATCC 700824) (Campylobacter pylori J99)).